We begin with the raw amino-acid sequence, 290 residues long: Arylamine N-acetyltransferase 2 (290 aa).

Cysteine 68 functions as the Acyl-thioester intermediate in the catalytic mechanism. The CoA site is built by threonine 103 and glycine 104. Residue 106-107 participates in substrate binding; sequence IH. Catalysis depends on residues histidine 107 and aspartate 122. CoA-binding residues include tyrosine 208, threonine 214, and serine 287.

It belongs to the arylamine N-acetyltransferase family.

It localises to the cytoplasm. The enzyme catalyses an arylamine + acetyl-CoA = an N-acetylarylamine + CoA. The catalysed reaction is an N-hydroxyarylamine + acetyl-CoA = an N-acetoxyarylamine + CoA. Catalyzes the N- or O-acetylation of various arylamine and heterocyclic amine substrates, and participates in the detoxification of a plethora of hydrazine and arylamine drugs. This chain is Arylamine N-acetyltransferase 2 (NAT2), found in Macaca mulatta (Rhesus macaque).